A 603-amino-acid chain; its full sequence is Proline--tRNA ligase (603 aa).

It belongs to the class-II aminoacyl-tRNA synthetase family. ProS type 1 subfamily. Homodimer.

It is found in the cytoplasm. It catalyses the reaction tRNA(Pro) + L-proline + ATP = L-prolyl-tRNA(Pro) + AMP + diphosphate. Its function is as follows. Catalyzes the attachment of proline to tRNA(Pro) in a two-step reaction: proline is first activated by ATP to form Pro-AMP and then transferred to the acceptor end of tRNA(Pro). As ProRS can inadvertently accommodate and process non-cognate amino acids such as alanine and cysteine, to avoid such errors it has two additional distinct editing activities against alanine. One activity is designated as 'pretransfer' editing and involves the tRNA(Pro)-independent hydrolysis of activated Ala-AMP. The other activity is designated 'posttransfer' editing and involves deacylation of mischarged Ala-tRNA(Pro). The misacylated Cys-tRNA(Pro) is not edited by ProRS. The polypeptide is Proline--tRNA ligase (Microcystis aeruginosa (strain NIES-843 / IAM M-2473)).